The following is a 966-amino-acid chain: Regulator of telomere elongation helicase 1 homolog (966 aa).

The Helicase ATP-binding domain occupies 7–284; sequence AGIPVHFPFE…QDMAGDEPKD (278 aa). Residue 42–49 coordinates ATP; the sequence is SPTGTGKT. [4Fe-4S] cluster contacts are provided by cysteine 146, cysteine 164, cysteine 173, and cysteine 209. The DEAH box motif lies at 233 to 236; it reads DEAH. Residues 844-864 form a disordered region; the sequence is VKIHKRERSSPTAPESTSQVS. Positions 853–863 are enriched in polar residues; that stretch reads SPTAPESTSQV. At threonine 855 the chain carries Phosphothreonine.

Belongs to the helicase family. RAD3/XPD subfamily.

The protein resides in the nucleus. The enzyme catalyses ATP + H2O = ADP + phosphate + H(+). A probable ATP-dependent DNA helicase implicated in DNA repair and the maintenance of genomic stability. Acts as an anti-recombinase to counteract toxic recombination and limit crossover during meiosis. Regulates meiotic recombination and crossover homeostasis by physically dissociating strand invasion events and thereby promotes noncrossover repair by meiotic synthesis dependent strand annealing (SDSA) as well as disassembly of D loop recombination intermediates. This chain is Regulator of telomere elongation helicase 1 homolog, found in Drosophila sechellia (Fruit fly).